A 114-amino-acid chain; its full sequence is Large ribosomal subunit protein bL20 (114 aa).

Belongs to the bacterial ribosomal protein bL20 family.

In terms of biological role, binds directly to 23S ribosomal RNA and is necessary for the in vitro assembly process of the 50S ribosomal subunit. It is not involved in the protein synthesizing functions of that subunit. The protein is Large ribosomal subunit protein bL20 of Anaeromyxobacter dehalogenans (strain 2CP-1 / ATCC BAA-258).